The chain runs to 119 residues: MAKHVTPREKRRARIRRKISGTAARPRLTIYKSLKHMYAQLVDDTTGTTIVSIATNAKALRDEVKDDDKTAAAKRVGEALAKAAMAKGIEAVVFDRNGFDYHGRVEAVAAAAREAGLKF.

This sequence belongs to the universal ribosomal protein uL18 family. In terms of assembly, part of the 50S ribosomal subunit; part of the 5S rRNA/L5/L18/L25 subcomplex. Contacts the 5S and 23S rRNAs.

Functionally, this is one of the proteins that bind and probably mediate the attachment of the 5S RNA into the large ribosomal subunit, where it forms part of the central protuberance. This is Large ribosomal subunit protein uL18 from Anaeromyxobacter sp. (strain Fw109-5).